The sequence spans 303 residues: Cytochrome c oxidase subunit 2 (303 aa).

Residues 1–25 form the signal peptide; the sequence is MRHSTTLTGCATGAAGLLAATAAAA. A run of 2 helical transmembrane segments spans residues 60-80 and 104-124; these read FILVIIAAITIFVTLLILYAV and WTIVPIVILVAIGAFSLPVLF. Residues His-217, Cys-252, Cys-256, and His-260 each contribute to the Cu cation site.

This sequence belongs to the cytochrome c oxidase subunit 2 family. Cu cation serves as cofactor.

It localises to the cell membrane. It carries out the reaction 4 Fe(II)-[cytochrome c] + O2 + 8 H(+)(in) = 4 Fe(III)-[cytochrome c] + 2 H2O + 4 H(+)(out). In terms of biological role, subunits I and II form the functional core of the enzyme complex. Electrons originating in cytochrome c are transferred via heme a and Cu(A) to the binuclear center formed by heme a3 and Cu(B). The protein is Cytochrome c oxidase subunit 2 (ctaC) of Cereibacter sphaeroides (Rhodobacter sphaeroides).